The chain runs to 1828 residues: Unconventional myosin-Va (1828 aa).

Ala-2 is subject to N-acetylalanine. The Myosin N-terminal SH3-like domain maps to 8–60 (TKFARVWIPDPEEVWKSAELLKDYKPGDKVLLLHLEEGKDLEYRLDPKTSELP). In terms of domain architecture, Myosin motor spans 69 to 763 (VGENDLTALS…QVAYLEKLRA (695 aa)). 163-170 (GESGAGKT) is a binding site for ATP. The segment at 599 to 633 (ISPTSATSSGRTPLTRVPVKPTKGRPGQTAKEHKK) is disordered. Position 600 is a phosphoserine (Ser-600). A compositionally biased stretch (polar residues) spans 600-610 (SPTSATSSGRT). An actin-binding region spans residues 643–665 (LHLLMETLNATTPHYVRCIKPND). IQ domains follow at residues 766–788 (LRAA…RYLC), 789–813 (MQRA…KFLR), 814–836 (RTKA…KYKI), 837–861 (RRAA…RKIL), 862–884 (REHK…HYKR), and 885–914 (TMKA…EARS). Coiled coils occupy residues 914–1239 (SVER…EVNA) and 1314–1418 (GLKE…ELEV). A Phosphothreonine modification is found at Thr-1032. The disordered stretch occupies residues 1105–1147 (VPKPGHKRTDSTHSSNESEYTFSSEFAETEDIAPRTEEPTEKK). Polar residues predominate over residues 1116 to 1130 (THSSNESEYTFSSEF). Positions 1136–1147 (IAPRTEEPTEKK) are enriched in basic and acidic residues. Phosphoserine is present on residues Ser-1425 and Ser-1625. The region spanning 1507–1783 (TSTINSIKKV…IRTIQVRLRD (277 aa)) is the Dilute domain. A Phosphothreonine modification is found at Thr-1733.

Belongs to the TRAFAC class myosin-kinesin ATPase superfamily. Myosin family. As to quaternary structure, may be a homodimer, which associates with multiple calmodulin or myosin light chains. Interacts with RIPL2, the interaction is required for its role in dendrite formation. Interacts with MLPH. Interacts with SYTL4. Interacts with MYRIP. Interacts with RAB10; mediates the transport to the plasma membrane of SLC2A4/GLUT4 storage vesicles. Interacts with FMR1; this interaction occurs in association with polyribosome.

It catalyses the reaction ATP + H2O = ADP + phosphate + H(+). Functionally, processive actin-based motor that can move in large steps approximating the 36-nm pseudo-repeat of the actin filament. Can hydrolyze ATP in the presence of actin, which is essential for its function as a motor protein. Involved in melanosome transport. Also mediates the transport of vesicles to the plasma membrane. May also be required for some polarization process involved in dendrite formation. This chain is Unconventional myosin-Va (Myo5a), found in Rattus norvegicus (Rat).